Reading from the N-terminus, the 177-residue chain is 2''-aminoglycoside nucleotidyltransferase (177 aa).

Mg(2+)-binding residues include Asp44, Asp46, and Asp86. Asp86 functions as the Proton acceptor in the catalytic mechanism.

It depends on Mg(2+) as a cofactor.

The catalysed reaction is nucleoside triphosphate + gentamicin = diphosphate + 2''-nucleotidylgentamicin.. Mediates bacterial resistance to kanamycin, gentamicin, dibekacin, sisomicin, neomycin and tobramycin by adenylating the 2''-hydroxyl group of these antibiotics. The protein is 2''-aminoglycoside nucleotidyltransferase (aadB) of Klebsiella pneumoniae.